The chain runs to 282 residues: MGQIINGKEVALKVKEEIKNFVNNRKEKNLQVPKIASILVGNDGGSIYYMGSQEKVANSLGVEFLKLTLPETCNDEDVIAEINKLNEDNNIHGIILQLPLPNNFDEKKIIKQISPNKDIDCLTFESQGKLYMGEPKFLPCTPNSVITLIKSLNIDIVGKNVVVLGRSNIVGKPVAQLLLNENATVTICHSKTKNLREVCKNADILVVAIGRPKFIDETYVNENAIVIDVGTSSFEGKITGDVDFDKVIDKCRYLTPVPGGVGSLTTTLLIKNACEALQENEY.

NADP(+) contacts are provided by residues glycine 165 to serine 167, serine 190, and threonine 231.

It belongs to the tetrahydrofolate dehydrogenase/cyclohydrolase family. As to quaternary structure, homodimer.

It catalyses the reaction (6R)-5,10-methylene-5,6,7,8-tetrahydrofolate + NADP(+) = (6R)-5,10-methenyltetrahydrofolate + NADPH. It carries out the reaction (6R)-5,10-methenyltetrahydrofolate + H2O = (6R)-10-formyltetrahydrofolate + H(+). It participates in one-carbon metabolism; tetrahydrofolate interconversion. Its function is as follows. Catalyzes the oxidation of 5,10-methylenetetrahydrofolate to 5,10-methenyltetrahydrofolate and then the hydrolysis of 5,10-methenyltetrahydrofolate to 10-formyltetrahydrofolate. The sequence is that of Bifunctional protein FolD from Clostridium beijerinckii (strain ATCC 51743 / NCIMB 8052) (Clostridium acetobutylicum).